We begin with the raw amino-acid sequence, 386 residues long: Protein RETICULATA-RELATED 4, chloroplastic (386 aa).

The transit peptide at 1–61 directs the protein to the chloroplast; the sequence is MAIASCFFCV…RRVPITPVLS (61 aa). Residues 61-99 are disordered; the sequence is SASSGNGGSDNNGGGLSGGGGGGDGGKNDGDGHGDEDRD. The span at 65 to 85 shows a compositional bias: gly residues; sequence GNGGSDNNGGGLSGGGGGGDG. Basic and acidic residues predominate over residues 86–99; it reads GKNDGDGHGDEDRD. 2 consecutive transmembrane segments (helical) span residues 201 to 221 and 273 to 293; these read VVFA…YLPA and KLFA…NAFI.

The protein belongs to the RETICULATA family.

It localises to the plastid. Its subcellular location is the chloroplast membrane. Functionally, may play a role in leaf development. The chain is Protein RETICULATA-RELATED 4, chloroplastic from Arabidopsis thaliana (Mouse-ear cress).